Reading from the N-terminus, the 444-residue chain is Phosphoglucosamine mutase (444 aa).

Catalysis depends on serine 100, which acts as the Phosphoserine intermediate. Mg(2+) is bound by residues serine 100, aspartate 240, aspartate 242, and aspartate 244. A Phosphoserine modification is found at serine 100.

This sequence belongs to the phosphohexose mutase family. Mg(2+) serves as cofactor. Post-translationally, activated by phosphorylation.

The enzyme catalyses alpha-D-glucosamine 1-phosphate = D-glucosamine 6-phosphate. In terms of biological role, catalyzes the conversion of glucosamine-6-phosphate to glucosamine-1-phosphate. This Desulforamulus reducens (strain ATCC BAA-1160 / DSM 100696 / MI-1) (Desulfotomaculum reducens) protein is Phosphoglucosamine mutase.